A 135-amino-acid polypeptide reads, in one-letter code: Small ribosomal subunit protein uS9 (135 aa).

The span at 102-115 (PLKTEGHLSRDPRA) shows a compositional bias: basic and acidic residues. Residues 102–135 (PLKTEGHLSRDPRAKERRKYGLKKARKAPQFSKR) are disordered. The span at 116–135 (KERRKYGLKKARKAPQFSKR) shows a compositional bias: basic residues.

Belongs to the universal ribosomal protein uS9 family.

This Synechococcus sp. (strain CC9311) protein is Small ribosomal subunit protein uS9.